The primary structure comprises 545 residues: CTP synthase (545 aa).

Residues 1 to 266 (MATNYIFVTG…DTFVCDRFRL (266 aa)) are amidoligase domain. Ser-14 contacts CTP. Residue Ser-14 participates in UTP binding. ATP is bound by residues 15 to 20 (SLGKGI) and Asp-72. Mg(2+)-binding residues include Asp-72 and Glu-140. CTP contacts are provided by residues 147–149 (DIE), 187–192 (KTKPTQ), and Lys-223. UTP is bound by residues 187 to 192 (KTKPTQ) and Lys-223. 239 to 241 (KDV) is an ATP binding site. The Glutamine amidotransferase type-1 domain maps to 291–542 (TIGMVGKYVE…VAAAKAYQDS (252 aa)). Gly-352 is an L-glutamine binding site. Cys-379 (nucleophile; for glutamine hydrolysis) is an active-site residue. L-glutamine contacts are provided by residues 380–383 (LGMQ), Glu-403, and Arg-470. Catalysis depends on residues His-515 and Glu-517.

Belongs to the CTP synthase family. Homotetramer.

It catalyses the reaction UTP + L-glutamine + ATP + H2O = CTP + L-glutamate + ADP + phosphate + 2 H(+). It carries out the reaction L-glutamine + H2O = L-glutamate + NH4(+). The enzyme catalyses UTP + NH4(+) + ATP = CTP + ADP + phosphate + 2 H(+). It functions in the pathway pyrimidine metabolism; CTP biosynthesis via de novo pathway; CTP from UDP: step 2/2. Its activity is regulated as follows. Allosterically activated by GTP, when glutamine is the substrate; GTP has no effect on the reaction when ammonia is the substrate. The allosteric effector GTP functions by stabilizing the protein conformation that binds the tetrahedral intermediate(s) formed during glutamine hydrolysis. Inhibited by the product CTP, via allosteric rather than competitive inhibition. In terms of biological role, catalyzes the ATP-dependent amination of UTP to CTP with either L-glutamine or ammonia as the source of nitrogen. Regulates intracellular CTP levels through interactions with the four ribonucleotide triphosphates. In Actinobacillus pleuropneumoniae serotype 5b (strain L20), this protein is CTP synthase.